Reading from the N-terminus, the 259-residue chain is Protein FAM220A (259 aa).

Residues 29–66 form a disordered region; it reads GLKRRSEKRNPSPSDVPSWTDQPVADTHGKSRAMAAAS. Residues 39–49 are compositionally biased toward polar residues; that stretch reads PSPSDVPSWTD.

In terms of assembly, interacts with transcriptional activator STAT3; the interaction occurs in both the nucleus and the cytoplasm, is enhanced by IL6 and promotes STAT3 dephosphorylation, leading to negative regulation of STAT3 transcriptional activator activity. Can interact with both unphosphorylated and phosphorylated STAT3 but interacts preferentially with phosphorylated STAT3 in the nucleus. Interacts with protein phosphatase PTPN2/TC45; this promotes interaction of PTPN2 with STAT3, leading to dephosphorylation of STAT3 by PTPN2.

It localises to the nucleus. The protein resides in the cytoplasm. It is found in the cytoplasmic vesicle. Its subcellular location is the secretory vesicle. The protein localises to the acrosome. Functionally, promotes dephosphorylation of transcriptional activator STAT3 by interacting with both STAT3 and protein phosphatase PTPN2. This promotes interaction of PTPN2 with STAT3 and mediates STAT3 dephosphorylation by PTPN2, leading to negative regulation of STAT3 transcriptional activator activity. May be required for spermiogenesis or sperm function. The chain is Protein FAM220A (Fam220a) from Rattus norvegicus (Rat).